The chain runs to 819 residues: DNA mismatch repair protein MutS (819 aa).

596-603 serves as a coordination point for ATP; sequence GPNMSGKS.

This sequence belongs to the DNA mismatch repair MutS family.

This protein is involved in the repair of mismatches in DNA. It is possible that it carries out the mismatch recognition step. This protein has a weak ATPase activity. This is DNA mismatch repair protein MutS from Thermosipho melanesiensis (strain DSM 12029 / CIP 104789 / BI429).